The primary structure comprises 506 residues: 2,3-bisphosphoglycerate-independent phosphoglycerate mutase (506 aa).

2 residues coordinate Mn(2+): Asp13 and Ser63. The active-site Phosphoserine intermediate is Ser63. Substrate contacts are provided by residues His124, 153-154 (RD), Arg183, Arg189, 254-257 (RADR), and Lys330. The Mn(2+) site is built by Asp396, His400, Asp437, His438, and His456.

Belongs to the BPG-independent phosphoglycerate mutase family. In terms of assembly, monomer. The cofactor is Mn(2+).

It carries out the reaction (2R)-2-phosphoglycerate = (2R)-3-phosphoglycerate. Its pathway is carbohydrate degradation; glycolysis; pyruvate from D-glyceraldehyde 3-phosphate: step 3/5. Functionally, catalyzes the interconversion of 2-phosphoglycerate and 3-phosphoglycerate. In Cereibacter sphaeroides (strain ATCC 17023 / DSM 158 / JCM 6121 / CCUG 31486 / LMG 2827 / NBRC 12203 / NCIMB 8253 / ATH 2.4.1.) (Rhodobacter sphaeroides), this protein is 2,3-bisphosphoglycerate-independent phosphoglycerate mutase.